The following is a 428-amino-acid chain: FAD-dependent monooxygenase kojA (428 aa).

Residues 52–60 (RLHKGPHYP) and 328–329 (SV) each bind FAD.

It belongs to the aromatic-ring hydroxylase family. FAD is required as a cofactor.

Probable FAD-dependent monooxygenase; part of the gene cluster that mediates the biosynthesis of 5-hydroxy-2-hydroxymethyl-1,4-pyrone, also know as kojic acid, a by-product in the fermentation process of malting rice that acts as a chelation agent. Glucose might be converted to kojic acid by a combination of dehydrogenase and dehydratase reactions involving kojA and probably additional enzymes. The protein is FAD-dependent monooxygenase kojA of Aspergillus flavus (strain ATCC 200026 / FGSC A1120 / IAM 13836 / NRRL 3357 / JCM 12722 / SRRC 167).